The chain runs to 680 residues: Conserved oligomeric Golgi complex subunit 6 (680 aa).

The interval 479–517 is disordered; that stretch reads HKSKKSGQLPRRSRTSSDSSQLTSVDALLSSSPSPPQNN.

This sequence belongs to the COG6 family. Component of the conserved oligomeric Golgi complex which is composed of eight different subunits and is required for normal Golgi morphology and localization. Interacts with COG5, COG7 and COG8.

The protein resides in the golgi apparatus membrane. Functionally, required for normal Golgi function. The protein is Conserved oligomeric Golgi complex subunit 6 of Arabidopsis thaliana (Mouse-ear cress).